Here is a 338-residue protein sequence, read N- to C-terminus: Galaxin (338 aa).

The N-terminal stretch at 1–23 (MKPSGAFLSLCVVLLSLATHCFS) is a signal peptide. Residues 30-47 (RRDAHSDTNALKSRDRRQ) are compositionally biased toward basic and acidic residues. The interval 30 to 50 (RRDAHSDTNALKSRDRRQAPA) is disordered.

Component of the acid-insoluble organic matrix of the aragonitic skeleton (at protein level). Initially, expressed in an aboral submarginal ring and then along calcifying septa.

Its subcellular location is the secreted. The chain is Galaxin from Acropora millepora (Staghorn coral).